Reading from the N-terminus, the 689-residue chain is MNFENLLIELGTEELPPKSLRKLAESFLANFTEELTKADLAFSSAVWYAAPRRLAINVTELALAQADKVVEKRGPAVSSAFDAEGKPTKAAEGWARGNGITVEQAERLVTDKGEWLVHNAKVEGVETKSLIAAMAQRALDKLPIPKPMRWGNNKTQFIRPVHTATMLLGSELIEGELLGIKSARTVRGHRFMGQASFELAHADHYLADLKEKGKVIADYEVRKTLIKADAEKAAAKIGGKADIEDSLLEEVASLVEWPVVLTASFEEKFLNVPSEALVYTMKGDQKYFPVFDEAGKLLPNFIFVTNIESKDPAQIISGNEKVVRPRLADAEFFFNTDKKHTLESRLPSLETVLFQQQLGTLKDKVNRISALAAFIAEQTGANAVDAARAGLLSKTDLMTNMVMEFTDTQGTMGMHYARLDGETEAVAVAMEEQYKPKFSGDTVPSAGVSCAVALADKLDTLVGIFGIGQAPKGAADPFALRRAAIGVLRIIVENKLPLDLVDLIAKAQALHGTNLSNANASDEVLEFLMARFRAWYQDKGIGVDVILAVLARRPTRPADFDSRINAVSHFRSLEASSALAAANKRVSNILAKVEGALPTTINANLLTEAAEQALAAKLNELQPLLAPLFANADYQQALTLLAGLRESVDQFFEDVMVMADDEALKNNRLALLNNLREQFLHVADISLLQ.

This sequence belongs to the class-II aminoacyl-tRNA synthetase family. Tetramer of two alpha and two beta subunits.

The protein localises to the cytoplasm. It catalyses the reaction tRNA(Gly) + glycine + ATP = glycyl-tRNA(Gly) + AMP + diphosphate. This is Glycine--tRNA ligase beta subunit from Shewanella baltica (strain OS185).